Consider the following 179-residue polypeptide: Auxin-responsive protein IAA15 (179 aa).

The short motif at 21-25 (LTLAL) is the EAR-like (transcriptional repression) element. The PB1 domain occupies 86–173 (RKYVKVALDG…SCKRMRLMKT (88 aa)).

It belongs to the Aux/IAA family. Homodimers and heterodimers.

Its subcellular location is the nucleus. Functionally, aux/IAA proteins are short-lived transcriptional factors that function as repressors of early auxin response genes at low auxin concentrations. Repression is thought to result from the interaction with auxin response factors (ARFs), proteins that bind to the auxin-responsive promoter element (AuxRE). Formation of heterodimers with ARF proteins may alter their ability to modulate early auxin response genes expression. This is Auxin-responsive protein IAA15 (IAA15) from Arabidopsis thaliana (Mouse-ear cress).